The primary structure comprises 975 residues: Translation initiation factor IF-2 (975 aa).

The segment covering Asp48 to Lys63 has biased composition (basic and acidic residues). 2 disordered regions span residues Asp48 to Arg84 and Phe96 to Thr388. Over residues Glu104–Asp115 the composition is skewed to low complexity. Residues Ala120 to Ala177 show a composition bias toward basic and acidic residues. Low complexity predominate over residues Lys178–Gln211. Over residues Asp212–Arg263 the composition is skewed to basic and acidic residues. The segment covering Lys302–Gly330 has biased composition (low complexity). Positions Ser359–Lys372 are enriched in gly residues. A tr-type G domain is found at Pro475 to Lys644. A G1 region spans residues Gly484 to Thr491. Gly484–Thr491 serves as a coordination point for GTP. The G2 stretch occupies residues Gly509–His513. A G3 region spans residues Asp530–Gly533. Residues Asp530 to His534 and Asn584 to Asp587 each bind GTP. Residues Asn584–Asp587 form a G4 region. A G5 region spans residues Ser620–Lys622.

This sequence belongs to the TRAFAC class translation factor GTPase superfamily. Classic translation factor GTPase family. IF-2 subfamily.

It is found in the cytoplasm. One of the essential components for the initiation of protein synthesis. Protects formylmethionyl-tRNA from spontaneous hydrolysis and promotes its binding to the 30S ribosomal subunits. Also involved in the hydrolysis of GTP during the formation of the 70S ribosomal complex. The sequence is that of Translation initiation factor IF-2 from Burkholderia pseudomallei (strain 1710b).